A 318-amino-acid polypeptide reads, in one-letter code: MTSKLEQLKQFTDVVADTGDIEAIRLYKPLDATTNPSLVYKAAQMPQYQALLDTSINGAKSITNSAEQLSAASDNLAVGIGLEILKLVPGRISTEVDARLSFDTNASIAKARHLISLYEKGGVDKSRVLIKLASTWEGIRAAEILEKEGINCNLTLLFGFNQAAACADAGVFLISPFVGRILDWYKANTNKKEYAAEEDPGVVSVRRIYNYYKQHGYNTVVMGASFRNIGEIEALAGCDRLTISPQLLQELDQDKGELKRVLSPDNRGEAIAKLIDTEASFRFGLNQDAMATEKLAEGIRGFVKDQINLENLLKSRAQ.

The active-site Schiff-base intermediate with substrate is the lysine 131.

This sequence belongs to the transaldolase family. Type 1 subfamily. In terms of assembly, homodimer.

It is found in the cytoplasm. It catalyses the reaction D-sedoheptulose 7-phosphate + D-glyceraldehyde 3-phosphate = D-erythrose 4-phosphate + beta-D-fructose 6-phosphate. It participates in carbohydrate degradation; pentose phosphate pathway; D-glyceraldehyde 3-phosphate and beta-D-fructose 6-phosphate from D-ribose 5-phosphate and D-xylulose 5-phosphate (non-oxidative stage): step 2/3. Functionally, transaldolase is important for the balance of metabolites in the pentose-phosphate pathway. The sequence is that of Transaldolase from Cellvibrio japonicus (strain Ueda107) (Pseudomonas fluorescens subsp. cellulosa).